We begin with the raw amino-acid sequence, 1052 residues long: Membrane-bound transcription factor site-1 protease (1052 aa).

An N-terminal signal peptide occupies residues methionine 1–glycine 17. Residues lysine 18–leucine 186 constitute a propeptide that is removed on maturation. The N-linked (GlcNAc...) asparagine glycan is linked to asparagine 148. A Phosphoserine modification is found at serine 168. Residues arginine 187–glycine 999 are Lumenal-facing. Positions proline 190–tyrosine 472 constitute a Peptidase S8 domain. Residue aspartate 218 is the Charge relay system of the active site. Residue asparagine 236 is glycosylated (N-linked (GlcNAc...) asparagine). Histidine 249 functions as the Charge relay system in the catalytic mechanism. Residue asparagine 305 is glycosylated (N-linked (GlcNAc...) asparagine). Serine 414 (charge relay system) is an active-site residue. Residues asparagine 515 and asparagine 728 are each glycosylated (N-linked (GlcNAc...) asparagine). Polar residues predominate over residues proline 877–arginine 887. The disordered stretch occupies residues proline 877–methionine 900. N-linked (GlcNAc...) asparagine glycosylation occurs at asparagine 939. Residues glutamine 1000 to serine 1022 form a helical membrane-spanning segment. At lysine 1023–valine 1052 the chain is on the cytoplasmic side. Residues lysine 1025–arginine 1037 show a composition bias toward basic residues. The interval lysine 1025–valine 1052 is disordered.

Belongs to the peptidase S8 family. Ca(2+) is required as a cofactor. The 148 kDa zymogen is processed progressively into two membrane-bound 120 and 106 kDa forms in the endoplasmic reticulum, and late into a secreted 98 kDa form. The propeptide is autocatalytically removed through an intramolecular cleavage after Leu-186. Further cleavage generates 14, 10, and 8 kDa intermediates.

The protein resides in the endoplasmic reticulum membrane. The protein localises to the golgi apparatus membrane. The enzyme catalyses Processes precursors containing basic and hydrophobic/aliphatic residues at P4 and P2, respectively, with a relatively relaxed acceptance of amino acids at P1 and P3.. Inhibited by divalent copper and zinc ions, but not by nickel or cobalt. Inhibited by its prosegment, but not smaller fragments. Inhibited by 4-(2-aminoethyl)benzenesulfonyl fluoride (AEBSF), a serine protease inhibitor. Its function is as follows. Serine protease that cleaves after hydrophobic or small residues, provided that Arg or Lys is in position P4: known substrates include SREBF1/SREBP1, SREBF2/SREBP2, BDNF, GNPTAB, ATF6, ATF6B and FAM20C. Cleaves substrates after Arg-Ser-Val-Leu (SREBP2), Arg-His-Leu-Leu (ATF6), Arg-Gly-Leu-Thr (BDNF) and its own propeptide after Arg-Arg-Leu-Leu. Catalyzes the first step in the proteolytic activation of the sterol regulatory element-binding proteins (SREBPs) SREBF1/SREBP1 and SREBF2/SREBP2. Also mediates the first step in the proteolytic activation of the cyclic AMP-dependent transcription factor ATF-6 (ATF6 and ATF6B). Mediates the protein cleavage of GNPTAB into subunit alpha and beta, thereby participating in biogenesis of lysosomes. Cleaves the propeptide from FAM20C which is required for FAM20C secretion from the Golgi apparatus membrane and for enhancement of FAM20C kinase activity, promoting osteoblast differentiation and biomineralization. Involved in the regulation of M6P-dependent Golgi-to-lysosome trafficking of lysosomal enzymes. It is required for the activation of CREB3L2/BBF2H7, a transcriptional activator of MIA3/TANGO and other genes controlling mega vesicle formation. Therefore, it plays a key role in the regulation of mega vesicle-mediated collagen trafficking. In astrocytes and osteoblasts, upon DNA damage and ER stress, mediates the first step of the regulated intramembrane proteolytic activation of the transcription factor CREB3L1, leading to the inhibition of cell-cycle progression. The polypeptide is Membrane-bound transcription factor site-1 protease (Cricetulus griseus (Chinese hamster)).